The primary structure comprises 409 residues: Formyl-CoA:oxalate CoA-transferase (409 aa).

CoA contacts are provided by residues 17 to 18 (QS), 71 to 74 (LNTK), 95 to 97 (NFG), Arg103, and 135 to 138 (KAYE). Asp167 functions as the Nucleophile in the catalytic mechanism. A disordered region spans residues 221-245 (LAEYPNDDFGDEVPRSGNASGGGQP). A substrate-binding site is contributed by 242-244 (GGQ).

Belongs to the CoA-transferase III family. Frc subfamily. In terms of assembly, homodimer.

It carries out the reaction formyl-CoA + oxalate = oxalyl-CoA + formate. It functions in the pathway metabolic intermediate degradation; oxalate degradation; CO(2) and formate from oxalate: step 1/2. In terms of biological role, involved in the catabolism of oxalate and in the adapatation to low pH via the induction of the oxalate-dependent acid tolerance response (ATR). Catalyzes the transfer of the CoA moiety from formyl-CoA to oxalate. The chain is Formyl-CoA:oxalate CoA-transferase from Streptomyces avermitilis (strain ATCC 31267 / DSM 46492 / JCM 5070 / NBRC 14893 / NCIMB 12804 / NRRL 8165 / MA-4680).